The primary structure comprises 157 residues: Iron-sulfur cluster repair protein DnrN (157 aa).

This sequence belongs to the RIC family.

It localises to the cytoplasm. Functionally, di-iron-containing protein involved in the repair of iron-sulfur clusters damaged by oxidative and nitrosative stress conditions. Required to repair damage caused by nitric oxide to FNR and NsrR transcription factors. This Neisseria gonorrhoeae protein is Iron-sulfur cluster repair protein DnrN (dnrN).